Here is a 198-residue protein sequence, read N- to C-terminus: Large ribosomal subunit protein bL27c (198 aa).

Residues 1–58 (MAMATSMSLNLIGAFKGLSLSSTSSFLRGDLSFSPKTSFTVTLPLENLQAPIPLTIES) constitute a chloroplast transit peptide.

It belongs to the bacterial ribosomal protein bL27 family. In terms of assembly, part of the 50S ribosomal subunit.

It is found in the plastid. The protein localises to the chloroplast. This Arabidopsis thaliana (Mouse-ear cress) protein is Large ribosomal subunit protein bL27c (RPL27).